The chain runs to 590 residues: MALSMLSSIPNLITHTRLPIIIKSSSCKASPRGIKVKIGNSNCEEIIVRRTANYHPTIWDYDYVQSLRSDYVGETYTRRLDKLKRDVKPMLGKVKKPLDQLELIDVLQRLGIYYHFKDEIKRILNGIYNQYNRHEEWQKDDLYATALEFRLLRQHGYDVPQDVFSRFKDDTGSFKACLCEDMKGMLCLYEASYLCVQGESTMEQARDFAHRHLGKGLEQNIDQNLAIEVKHALELPLHWRMPRLEARWFIDVYEKRQDMNPILLEFAKLDFNMVQATHQEDLRHMSSWWSSTRLGEKLNFARDRLMENFLWTVGVIFEPQYGYCRRMSTKVNTLITIIDDVYDVYGTMDELELFTDVVDRWDINAMDPLPEYMKLCFLALYNSTNEMAYDALKEHGLHIVSYLRKAWSDLCKSYLLEAKWYYSRYTPSLQEYISNSWISISGPVILVHAYFLVANPITKEALQSLERYHNIIRWSSMILRLSDDLGTSLDELKRGDVPKSIQCYMYETGASEEDARKHTSYLIGETWKKLNEDGAVESPFPETFIGIAMNLARMAQCMYQHGDGHGIEYGETEDRVLSLLVEPIPSLSSE.

Asp-339, Asp-343, Asp-483, Thr-487, and Glu-491 together coordinate Mg(2+). The DDXXD motif motif lies at 339 to 343 (DDVYD).

This sequence belongs to the terpene synthase family. Mg(2+) serves as cofactor.

The catalysed reaction is (2E)-geranyl diphosphate + H2O = (S)-alpha-terpineol + diphosphate. The protein operates within secondary metabolite biosynthesis; terpenoid biosynthesis. Functionally, mediates the conversion of geranyl diphosphate into alpha-terpineol, a monoterpenol. Monoterpenols contribute to the final grape and wine aroma and flavor. Also forms some 1,8-cineole and traces of other monoterpenoids. In Vitis vinifera (Grape), this protein is (-)-alpha-terpineol synthase.